We begin with the raw amino-acid sequence, 740 residues long: Ethylene receptor 1 (740 aa).

3 consecutive transmembrane segments (helical) span residues 23-43 (ISDF…IYFV), 54-74 (VLVQ…INLW), and 92-112 (VLTA…IPDL). The Cu cation site is built by Cys-65 and His-69. In terms of domain architecture, GAF spans 158-307 (DRHTILKTTL…VVADQVAVAL (150 aa)). A Histidine kinase domain is found at 350-588 (VMNHEMRTPM…TFIVKLGIAD (239 aa)). A Phosphohistidine; by autocatalysis modification is found at His-353. The 118-residue stretch at 614 to 731 (KVLVMDDNGV…KMRSVLSELI (118 aa)) folds into the Response regulatory domain. Asp-662 is subject to 4-aspartylphosphate.

Belongs to the ethylene receptor family. As to quaternary structure, homodimer; disulfide-linked. Cu cation serves as cofactor. Post-translationally, activation probably requires a transfer of a phosphate group between a His in the transmitter domain and an Asp of the receiver domain. As to expression, in seeds and placenta.

The protein resides in the endoplasmic reticulum membrane. The catalysed reaction is ATP + protein L-histidine = ADP + protein N-phospho-L-histidine.. In terms of biological role, may act early in the ethylene signal transduction pathway, possibly as an ethylene receptor, or as a regulator of the pathway. This is Ethylene receptor 1 (ETR1) from Cucumis melo var. cantalupensis (Netted muskmelon).